The sequence spans 282 residues: Small ribosomal subunit protein uS2 (282 aa).

The interval 260–282 (KRRRSKVYKEEEREVVTNEDESR) is disordered. Basic and acidic residues predominate over residues 266 to 282 (VYKEEEREVVTNEDESR).

The protein belongs to the universal ribosomal protein uS2 family.

This is Small ribosomal subunit protein uS2 from Wolbachia pipientis wMel.